The chain runs to 253 residues: 5-oxoprolinase subunit A (253 aa).

This sequence belongs to the LamB/PxpA family. As to quaternary structure, forms a complex composed of PxpA, PxpB and PxpC.

It catalyses the reaction 5-oxo-L-proline + ATP + 2 H2O = L-glutamate + ADP + phosphate + H(+). In terms of biological role, catalyzes the cleavage of 5-oxoproline to form L-glutamate coupled to the hydrolysis of ATP to ADP and inorganic phosphate. In Bacillus cereus (strain B4264), this protein is 5-oxoprolinase subunit A.